Here is a 357-residue protein sequence, read N- to C-terminus: Chorismate synthase (357 aa).

NADP(+)-binding residues include Arg-48 and Arg-54. Residues 125 to 127 (RSS), 243 to 244 (NA), Gly-283, 298 to 302 (KPTSS), and Arg-324 each bind FMN.

Belongs to the chorismate synthase family. As to quaternary structure, homotetramer. FMNH2 is required as a cofactor.

It carries out the reaction 5-O-(1-carboxyvinyl)-3-phosphoshikimate = chorismate + phosphate. The protein operates within metabolic intermediate biosynthesis; chorismate biosynthesis; chorismate from D-erythrose 4-phosphate and phosphoenolpyruvate: step 7/7. In terms of biological role, catalyzes the anti-1,4-elimination of the C-3 phosphate and the C-6 proR hydrogen from 5-enolpyruvylshikimate-3-phosphate (EPSP) to yield chorismate, which is the branch point compound that serves as the starting substrate for the three terminal pathways of aromatic amino acid biosynthesis. This reaction introduces a second double bond into the aromatic ring system. In Pasteurella multocida (strain Pm70), this protein is Chorismate synthase.